An 816-amino-acid chain; its full sequence is Mitogen-activated protein kinase 7 (816 aa).

The segment at 1-26 is disordered; it reads MAEPLKEEDGEDGSAEPPGPVKAEPA. Alanine 2 is subject to N-acetylalanine. The required for cytoplasmic targeting stretch occupies residues 2-77; that stretch reads AEPLKEEDGE…VVSSARRRLT (76 aa). Residues 55 to 347 enclose the Protein kinase domain; sequence YEIIETIGNG…AAAALRHPFL (293 aa). ATP-binding positions include 61-69 and lysine 84; that span reads IGNGAYGVV. Residues 78–139 are required for binding to MAP2K5; that stretch reads GQQVAIKKIP…FKSVYVVLDL (62 aa). Positions 140–406 are necessary for oligomerization; sequence MESDLHQIIH…QQIRFQPSLQ (267 aa). The Proton acceptor role is filled by aspartate 182. The TXY motif lies at 219 to 221; sequence TEY. Residues 406–737 form a disordered region; it reads QPVASEPGCP…PVFSGTPKGS (332 aa). The segment at 407–806 is may not be required for kinase activity; required to stimulate MEF2C activity; sequence PVASEPGCPD…REIQMDSPML (400 aa). 2 stretches are compositionally biased toward pro residues: residues 433-445 and 454-463; these read SPPPAPPPCPGPA and QPPPPVSEPA. A compositionally biased stretch (low complexity) spans 476 to 486; sequence KAALKAALLKS. Basic and acidic residues-rich tracts occupy residues 502–519, 527–544, and 563–573; these read PEPRKPVTAQERQREREE, RAKEREKRRQERERKERG, and DNDRSLLERWT. Positions 505–539 match the Nuclear localization signal motif; the sequence is RKPVTAQERQREREEKRRRRQERAKEREKRRQERE. The span at 578 to 587 shows a compositional bias: low complexity; the sequence is PAAPALTSVP. Composition is skewed to pro residues over residues 588–610 and 628–655; these read APAPAPTPTPTPVQPTSPPPGPV and VPQPACPPPGPAPHPTGPPGPIPVPAPP. Positions 676–685 are enriched in low complexity; sequence PGSSTPGVLP. Residues 686 to 695 are compositionally biased toward pro residues; that stretch reads YFPPGLPPPD. A compositionally biased stretch (polar residues) spans 701–720; sequence QSSMSESPDVNLVTQQLSKS. A Phosphoserine modification is found at serine 720. At threonine 733 the chain carries Phosphothreonine.

This sequence belongs to the protein kinase superfamily. CMGC Ser/Thr protein kinase family. MAP kinase subfamily. Interacts with MAP2K5. Forms oligomers. Interacts with MEF2A, MEF2C and MEF2D; the interaction phosphorylates the MEF2s and enhances transcriptional activity of MEF2A, MEF2C but not MEF2D. Interacts with SGK1. Preferentially interacts with PML isoform PML-4 but shows interaction also with its other isoforms: isoform PML-1, isoform PML-2, isoform PML-3 and isoform PML-6. Interacts (via N-terminal half) with HSP90AB1-CDC37 chaperone complex in resting cells; the interaction is MAP2K5-independent and prevents MAPK7 from ubiquitination and proteasomal degradation. Interacts with STUB1/CHIP; the interaction is enhanced in the presence of IGF1 or MAP2K5 and promotes STUB1/CHIP E3 ligase activity. Mg(2+) serves as cofactor. Dually phosphorylated on Thr-219 and Tyr-221, which activates the enzyme. Autophosphorylated in vitro on threonine and tyrosine residues when the C-terminal part of the kinase, which could have a regulatory role, is absent. As to expression, expressed in many adult tissues. Abundant in heart, placenta, lung, kidney and skeletal muscle. Not detectable in liver.

The protein localises to the cytoplasm. It is found in the nucleus. The protein resides in the PML body. The enzyme catalyses L-seryl-[protein] + ATP = O-phospho-L-seryl-[protein] + ADP + H(+). It carries out the reaction L-threonyl-[protein] + ATP = O-phospho-L-threonyl-[protein] + ADP + H(+). With respect to regulation, activated by tyrosine and threonine phosphorylation. Activated in response to hyperosmolarity, hydrogen peroxide, and epidermal growth factor (EGF). In terms of biological role, plays a role in various cellular processes such as proliferation, differentiation and cell survival. The upstream activator of MAPK7 is the MAPK kinase MAP2K5. Upon activation, it translocates to the nucleus and phosphorylates various downstream targets including MEF2C. EGF activates MAPK7 through a Ras-independent and MAP2K5-dependent pathway. As part of the MAPK/ERK signaling pathway, acts as a negative regulator of apoptosis in cardiomyocytes via interaction with STUB1/CHIP and promotion of STUB1-mediated ubiquitination and degradation of ICER-type isoforms of CREM. May have a role in muscle cell differentiation. May be important for endothelial function and maintenance of blood vessel integrity. MAP2K5 and MAPK7 interact specifically with one another and not with MEK1/ERK1 or MEK2/ERK2 pathways. Phosphorylates SGK1 at Ser-78 and this is required for growth factor-induced cell cycle progression. Involved in the regulation of p53/TP53 by disrupting the PML-MDM2 interaction. In Homo sapiens (Human), this protein is Mitogen-activated protein kinase 7 (MAPK7).